The following is a 274-amino-acid chain: Large ribosomal subunit protein uL2 (274 aa).

Disordered stretches follow at residues 28–55 (APHAPLIEKKSKSGGRNNNGRITTRHVG) and 224–274 (VAMN…RRRK).

The protein belongs to the universal ribosomal protein uL2 family. Part of the 50S ribosomal subunit. Forms a bridge to the 30S subunit in the 70S ribosome.

One of the primary rRNA binding proteins. Required for association of the 30S and 50S subunits to form the 70S ribosome, for tRNA binding and peptide bond formation. It has been suggested to have peptidyltransferase activity; this is somewhat controversial. Makes several contacts with the 16S rRNA in the 70S ribosome. The polypeptide is Large ribosomal subunit protein uL2 (Pseudomonas putida (strain ATCC 47054 / DSM 6125 / CFBP 8728 / NCIMB 11950 / KT2440)).